The primary structure comprises 258 residues: Imidazole glycerol phosphate synthase subunit HisF (258 aa).

Residues D12 and D131 contribute to the active site.

It belongs to the HisA/HisF family. In terms of assembly, heterodimer of HisH and HisF.

It is found in the cytoplasm. It catalyses the reaction 5-[(5-phospho-1-deoxy-D-ribulos-1-ylimino)methylamino]-1-(5-phospho-beta-D-ribosyl)imidazole-4-carboxamide + L-glutamine = D-erythro-1-(imidazol-4-yl)glycerol 3-phosphate + 5-amino-1-(5-phospho-beta-D-ribosyl)imidazole-4-carboxamide + L-glutamate + H(+). It participates in amino-acid biosynthesis; L-histidine biosynthesis; L-histidine from 5-phospho-alpha-D-ribose 1-diphosphate: step 5/9. Its function is as follows. IGPS catalyzes the conversion of PRFAR and glutamine to IGP, AICAR and glutamate. The HisF subunit catalyzes the cyclization activity that produces IGP and AICAR from PRFAR using the ammonia provided by the HisH subunit. This Corynebacterium diphtheriae (strain ATCC 700971 / NCTC 13129 / Biotype gravis) protein is Imidazole glycerol phosphate synthase subunit HisF.